The chain runs to 932 residues: Protocadherin gamma-A6 (932 aa).

The first 29 residues, 1–29, serve as a signal peptide directing secretion; sequence MAPPQRHPQRSEQVLLLTLLGTLWGAAAA. Cadherin domains are found at residues 30 to 133, 134 to 242, 243 to 347, 348 to 452, 453 to 562, and 570 to 682; these read QIRY…TPRF, LKEE…TPMF, TQPV…VPEV, VVTS…PPTF, PHSS…APEI, and DGST…EPSA. At 30–692 the chain is on the extracellular side; that stretch reads QIRYSIPEEL…KPNDSDLTLY (663 aa). An N-linked (GlcNAc...) asparagine glycan is attached at N81. 2 N-linked (GlcNAc...) asparagine glycosylation sites follow: N419 and N545. N-linked (GlcNAc...) asparagine glycosylation is present at N685. Residues 693–713 form a helical membrane-spanning segment; it reads LVVAVAAVSCVFLAFVIVLLA. The Cytoplasmic portion of the chain corresponds to 714-932; that stretch reads LRLQRWHKSR…KKKSGKKEKK (219 aa). Disordered regions lie at residues 804–841 and 902–932; these read PRQL…WPNN and ATLT…KEKK. Over residues 806 to 841 the composition is skewed to polar residues; it reads QLQQAPPNTDWRFSQAQRPGTSGSQNGDDTGTWPNN. Over residues 922-932 the composition is skewed to basic residues; that stretch reads NKKKSGKKEKK.

It localises to the cell membrane. Functionally, potential calcium-dependent cell-adhesion protein. May be involved in the establishment and maintenance of specific neuronal connections in the brain. This is Protocadherin gamma-A6 (PCDHGA6) from Homo sapiens (Human).